A 191-amino-acid polypeptide reads, in one-letter code: Dephospho-CoA kinase (191 aa).

The DPCK domain occupies alanine 3–valine 191. Alanine 11–phenylalanine 16 serves as a coordination point for ATP.

The protein belongs to the CoaE family.

Its subcellular location is the cytoplasm. It carries out the reaction 3'-dephospho-CoA + ATP = ADP + CoA + H(+). It functions in the pathway cofactor biosynthesis; coenzyme A biosynthesis; CoA from (R)-pantothenate: step 5/5. Functionally, catalyzes the phosphorylation of the 3'-hydroxyl group of dephosphocoenzyme A to form coenzyme A. The protein is Dephospho-CoA kinase of Rickettsia conorii (strain ATCC VR-613 / Malish 7).